Consider the following 426-residue polypeptide: Tol-Pal system protein TolB (426 aa).

A signal peptide spans 1 to 24 (MKLKSRFTSIIGVITLFFSQTVTA).

Belongs to the TolB family. In terms of assembly, the Tol-Pal system is composed of five core proteins: the inner membrane proteins TolA, TolQ and TolR, the periplasmic protein TolB and the outer membrane protein Pal. They form a network linking the inner and outer membranes and the peptidoglycan layer.

The protein resides in the periplasm. Functionally, part of the Tol-Pal system, which plays a role in outer membrane invagination during cell division and is important for maintaining outer membrane integrity. This Actinobacillus pleuropneumoniae serotype 3 (strain JL03) protein is Tol-Pal system protein TolB.